The primary structure comprises 513 residues: V-type proton ATPase subunit B, kidney isoform (513 aa).

Polar residues predominate over residues methionine 1 to aspartate 18. Positions methionine 1 to threonine 21 are disordered. An ATP-binding site is contributed by arginine 394. The short motif at aspartate 510–leucine 513 is the PDZ-binding element.

The protein belongs to the ATPase alpha/beta chains family. As to quaternary structure, V-ATPase is a heteromultimeric enzyme made up of two complexes: the ATP-hydrolytic V1 complex and the proton translocation V0 complex. The V1 complex consists of three catalytic AB heterodimers that form a heterohexamer, three peripheral stalks each consisting of EG heterodimers, one central rotor including subunits D and F, and the regulatory subunits C and H. The proton translocation complex V0 consists of the proton transport subunit a, a ring of proteolipid subunits c9c'', rotary subunit d, subunits e and f, and the accessory subunits ATP6AP1/Ac45 and ATP6AP2/PRR. Forms a complex with NHERF1 and SCL4A7. Highly expressed in the kidney; found in early distal nephron, encompassing thick ascending limbs and distal convoluted tubules and in the alpha-intercalated cells of the cortical collecting ducts (at protein level). Expressed in the olfactory epithelium (at protein level). Expressed at lower levels in the testis.

Its subcellular location is the apical cell membrane. The protein localises to the basolateral cell membrane. Its function is as follows. Non-catalytic subunit of the V1 complex of vacuolar(H+)-ATPase (V-ATPase), a multisubunit enzyme composed of a peripheral complex (V1) that hydrolyzes ATP and a membrane integral complex (V0) that translocates protons. V-ATPase is responsible for acidifying and maintaining the pH of intracellular compartments and in some cell types, is targeted to the plasma membrane, where it is responsible for acidifying the extracellular environment. Essential for the proper assembly and activity of V-ATPase. In renal intercalated cells, mediates secretion of protons (H+) into the urine thereby ensuring correct urinary acidification. Required for optimal olfactory function by mediating the acidification of the nasal olfactory epithelium. The sequence is that of V-type proton ATPase subunit B, kidney isoform (Atp6v1b1) from Mus musculus (Mouse).